Reading from the N-terminus, the 133-residue chain is Stage III sporulation protein AD (133 aa).

3 consecutive transmembrane segments (helical) span residues 2-22 (QIDI…SLIV), 29-49 (FAFL…VDQI), and 108-128 (ILIL…ILGL).

Its subcellular location is the cell membrane. In Bacillus subtilis (strain 168), this protein is Stage III sporulation protein AD (spoIIIAD).